A 394-amino-acid polypeptide reads, in one-letter code: Cell division protein FtsZ (394 aa).

Residues 21-25 (GGGNN), 108-110 (GTG), Glu139, Arg143, and Asp187 each bind GTP. Residues 317-394 (DKPSSQGRKA…EERRSRRTRR (78 aa)) are disordered. Composition is skewed to low complexity over residues 328–346 (STGF…SGAS) and 353–364 (SAHTSHSQSSES). The span at 365 to 388 (VNERSHTTKDDDIPSFIRNREERR) shows a compositional bias: basic and acidic residues.

Belongs to the FtsZ family. As to quaternary structure, homodimer. Polymerizes to form a dynamic ring structure in a strictly GTP-dependent manner. Interacts directly with several other division proteins.

It localises to the cytoplasm. Functionally, essential cell division protein that forms a contractile ring structure (Z ring) at the future cell division site. The regulation of the ring assembly controls the timing and the location of cell division. One of the functions of the FtsZ ring is to recruit other cell division proteins to the septum to produce a new cell wall between the dividing cells. Binds GTP and shows GTPase activity. The sequence is that of Cell division protein FtsZ from Staphylococcus epidermidis (strain ATCC 12228 / FDA PCI 1200).